The sequence spans 483 residues: Matrix metalloproteinase-20 (483 aa).

Positions 1-22 (MKVLPASGLAVFLIMALKFSTA) are cleaved as a signal peptide. Residues 23-107 (APSLVAASPR…PRCGVPDVAN (85 aa)) constitute a propeptide that is removed on maturation. The short motif at 98 to 105 (PRCGVPDV) is the Cysteine switch element. Cys-100 provides a ligand contact to Zn(2+). Ca(2+)-binding residues include Glu-164, Ala-165, and Asp-166. Positions 176 and 178 each coordinate Zn(2+). Ca(2+)-binding residues include Asp-183, Gly-184, Arg-186, and Thr-188. A Zn(2+)-binding site is contributed by His-191. Residues Glu-197, Gly-198, Gly-200, and Asp-202 each contribute to the Ca(2+) site. His-204 contacts Zn(2+). Ca(2+) contacts are provided by Asp-206 and Glu-209. Position 226 (His-226) interacts with Zn(2+). Glu-227 is a catalytic residue. His-230 and His-236 together coordinate Zn(2+). Hemopexin repeat units follow at residues 293–343 (PDLC…FPQL), 344–389 (MSNV…GFPR), 391–439 (VQQI…FSGV), and 440–483 (NGQI…WIGC). The cysteines at positions 296 and 483 are disulfide-linked.

Belongs to the peptidase M10A family. Requires Zn(2+) as cofactor. It depends on Ca(2+) as a cofactor. Autoactivates at least at the 107-Asn-|-Tyr-108 site. In terms of tissue distribution, expressed specifically in the enamel organ.

Its subcellular location is the secreted. It localises to the extracellular space. It is found in the extracellular matrix. Degrades amelogenin, the major protein component of the enamel matrix and two of the macromolecules characterizing the cartilage extracellular matrix: aggrecan and the cartilage oligomeric matrix protein (COMP). May play a central role in tooth enamel formation. Cleaves aggrecan at the '360-Asn-|-Phe-361' site. The polypeptide is Matrix metalloproteinase-20 (MMP20) (Homo sapiens (Human)).